The following is a 545-amino-acid chain: CTP synthase (545 aa).

Residues Met-1–Ile-266 are amidoligase domain. A CTP-binding site is contributed by Ser-14. Ser-14 contacts UTP. ATP is bound by residues Ser-15–Ile-20 and Asp-72. Mg(2+) contacts are provided by Asp-72 and Glu-140. CTP-binding positions include Asp-147 to Glu-149, Lys-187 to Gln-192, and Lys-223. UTP-binding positions include Lys-187 to Gln-192 and Lys-223. Lys-239–Val-241 provides a ligand contact to ATP. A Glutamine amidotransferase type-1 domain is found at Thr-291–Arg-542. Gly-352 serves as a coordination point for L-glutamine. Cys-379 serves as the catalytic Nucleophile; for glutamine hydrolysis. L-glutamine contacts are provided by residues Leu-380 to Gln-383, Glu-403, and Arg-470. Active-site residues include His-515 and Glu-517.

The protein belongs to the CTP synthase family. Homotetramer.

The catalysed reaction is UTP + L-glutamine + ATP + H2O = CTP + L-glutamate + ADP + phosphate + 2 H(+). It catalyses the reaction L-glutamine + H2O = L-glutamate + NH4(+). It carries out the reaction UTP + NH4(+) + ATP = CTP + ADP + phosphate + 2 H(+). It participates in pyrimidine metabolism; CTP biosynthesis via de novo pathway; CTP from UDP: step 2/2. With respect to regulation, allosterically activated by GTP, when glutamine is the substrate; GTP has no effect on the reaction when ammonia is the substrate. The allosteric effector GTP functions by stabilizing the protein conformation that binds the tetrahedral intermediate(s) formed during glutamine hydrolysis. Inhibited by the product CTP, via allosteric rather than competitive inhibition. Catalyzes the ATP-dependent amination of UTP to CTP with either L-glutamine or ammonia as the source of nitrogen. Regulates intracellular CTP levels through interactions with the four ribonucleotide triphosphates. This chain is CTP synthase, found in Shewanella woodyi (strain ATCC 51908 / MS32).